A 102-amino-acid chain; its full sequence is Small ribosomal subunit protein uS10 (102 aa).

This sequence belongs to the universal ribosomal protein uS10 family. Part of the 30S ribosomal subunit.

Its function is as follows. Involved in the binding of tRNA to the ribosomes. This chain is Small ribosomal subunit protein uS10, found in Pyrococcus abyssi (strain GE5 / Orsay).